We begin with the raw amino-acid sequence, 1288 residues long: Vacuolating cytotoxin autotransporter (1288 aa).

Residues 1–33 form the signal peptide; it reads MEIQQTHRKINRPLVSLVLAGALISAIPQESHA. The disordered stretch occupies residues 326 to 377; sequence PPEGGYKDKPNSTTSQSGTKNDKKEISQNNNSNTEVINPPNNTQKTETEPTQ. Polar residues predominate over residues 352 to 376; it reads SQNNNSNTEVINPPNNTQKTETEPT. The region spanning 1015–1288 is the Autotransporter domain; sequence KYEKPTNVWA…ASNLGMRYSF (274 aa).

The protein resides in the periplasm. It is found in the secreted. Its subcellular location is the cell surface. The protein localises to the cell outer membrane. Its function is as follows. Induces vacuolation of eukaryotic cells. Causes ulceration and gastric lesions. The polypeptide is Vacuolating cytotoxin autotransporter (vacA) (Helicobacter pylori (strain J99 / ATCC 700824) (Campylobacter pylori J99)).